Reading from the N-terminus, the 434-residue chain is Ribosomal protein uS12 methylthiotransferase RimO (434 aa).

One can recognise an MTTase N-terminal domain in the interval 2–112; the sequence is AKIGFVSLGC…VLEAVQVVLP (111 aa). 6 residues coordinate [4Fe-4S] cluster: Cys-11, Cys-47, Cys-76, Cys-142, Cys-146, and Cys-149. In terms of domain architecture, Radical SAM core spans 128–365; sequence LTPRHYAYVK…LELQARVSLR (238 aa). The region spanning 368 to 434 is the TRAM domain; the sequence is QRFVGKTLEV…DTYDLHGVQA (67 aa).

This sequence belongs to the methylthiotransferase family. RimO subfamily. It depends on [4Fe-4S] cluster as a cofactor.

The protein resides in the cytoplasm. It carries out the reaction L-aspartate(89)-[ribosomal protein uS12]-hydrogen + (sulfur carrier)-SH + AH2 + 2 S-adenosyl-L-methionine = 3-methylsulfanyl-L-aspartate(89)-[ribosomal protein uS12]-hydrogen + (sulfur carrier)-H + 5'-deoxyadenosine + L-methionine + A + S-adenosyl-L-homocysteine + 2 H(+). Functionally, catalyzes the methylthiolation of an aspartic acid residue of ribosomal protein uS12. The polypeptide is Ribosomal protein uS12 methylthiotransferase RimO (Thermus thermophilus (strain ATCC 27634 / DSM 579 / HB8)).